We begin with the raw amino-acid sequence, 371 residues long: MEYDAYNDSGIYDDEYSDGFGYFVDLEEASPWEAKVAPVFLVVIYSLVCFLGLLGNGLVIVIATFKMKKTVNTVWFVNLAVADFLFNIFLPMHITYAAMDYHWVFGKAMCKISNFLLSHNMYTSVFLLTVISFDRCISVLLPVWSQNHRSIRLAYMTCSAVWVLAFFLSSPSLVFRDTANIHGKITCFNNFSLAAPESSPHPAHSQVVSTGYSRHVAVTVTRFLCGFLIPVFIITACYLTIVFKLQRNRLAKNKKPFKIIITIIITFFLCWCPYHTLYLLELHHTAVPSSVFSLGLPLATAVAIANSCMNPILYVFMGHDFRKFKVALFSRLANALSEDTGPSSYPSHRSFTKMSSLNEKASVNEKETSTL.

Residues 1-39 (MEYDAYNDSGIYDDEYSDGFGYFVDLEEASPWEAKVAPV) lie on the Extracellular side of the membrane. Asparagine 7 is a glycosylation site (N-linked (GlcNAc...) asparagine). Residues 40-62 (FLVVIYSLVCFLGLLGNGLVIVI) traverse the membrane as a helical segment. At 63–73 (ATFKMKKTVNT) the chain is on the cytoplasmic side. Residues 74–95 (VWFVNLAVADFLFNIFLPMHIT) form a helical membrane-spanning segment. Over 96–112 (YAAMDYHWVFGKAMCKI) the chain is Extracellular. Cysteine 110 and cysteine 187 are joined by a disulfide. A helical transmembrane segment spans residues 113 to 133 (SNFLLSHNMYTSVFLLTVISF). Residues 134–152 (DRCISVLLPVWSQNHRSIR) are Cytoplasmic-facing. Residues 153–174 (LAYMTCSAVWVLAFFLSSPSLV) traverse the membrane as a helical segment. The Extracellular segment spans residues 175–222 (FRDTANIHGKITCFNNFSLAAPESSPHPAHSQVVSTGYSRHVAVTVTR). A glycan (N-linked (GlcNAc...) asparagine) is linked at asparagine 190. The chain crosses the membrane as a helical span at residues 223–243 (FLCGFLIPVFIITACYLTIVF). At 244–259 (KLQRNRLAKNKKPFKI) the chain is on the cytoplasmic side. The helical transmembrane segment at 260–280 (IITIIITFFLCWCPYHTLYLL) threads the bilayer. The Extracellular portion of the chain corresponds to 281 to 298 (ELHHTAVPSSVFSLGLPL). Residues 299–318 (ATAVAIANSCMNPILYVFMG) traverse the membrane as a helical segment. Topologically, residues 319–371 (HDFRKFKVALFSRLANALSEDTGPSSYPSHRSFTKMSSLNEKASVNEKETSTL) are cytoplasmic. At serine 337 the chain carries Phosphoserine. Position 340 is a phosphothreonine (threonine 340). A phosphoserine mark is found at serine 347, serine 350, and serine 356. Threonine 370 carries the phosphothreonine modification.

Belongs to the chemokine-like receptor (CMKLR) family. Expressed in the differentiated adipocytes (at protein level). Ubiquitous. Highly expressed in adipose tissue and immature plasmacytoid dendritic cells (DCs) and at lower levels in myeloid DCs, macrophages, and NK cells. Expressed on macrophages isolated from different tissues, including peritoneal cavities, pleural cavities and spleen.

The protein resides in the cell membrane. Functionally, receptor for the chemoattractant adipokine chemerin/RARRES2 and for the omega-3 fatty acid derived molecule resolvin E1. Interaction with RARRES2 initiates activation of G proteins G(i)/G(o) and beta-arrestin pathways inducing cellular responses via second messenger pathways such as intracellular calcium mobilization, phosphorylation of MAP kinases MAPK1/MAPK3 (ERK1/2), TYRO3, MAPK14/P38MAPK and PI3K leading to multifunctional effects, like, reduction of immune responses, enhancing of adipogenesis and angionesis. Resolvin E1 down-regulates cytokine production in macrophages by reducing the activation of MAPK1/3 (ERK1/2) and NF-kappa-B. Positively regulates adipogenesis and adipocyte metabolism. This Mus musculus (Mouse) protein is Chemerin-like receptor 1 (Cmklr1).